The chain runs to 137 residues: Large ribosomal subunit protein uL16 (137 aa).

Residues 1–17 (MLSPKRVKFRKRQRGRL) show a composition bias toward basic residues. A disordered region spans residues 1-24 (MLSPKRVKFRKRQRGRLKGTDERG).

It belongs to the universal ribosomal protein uL16 family. In terms of assembly, part of the 50S ribosomal subunit.

Functionally, binds 23S rRNA and is also seen to make contacts with the A and possibly P site tRNAs. This chain is Large ribosomal subunit protein uL16, found in Leptospira borgpetersenii serovar Hardjo-bovis (strain JB197).